The primary structure comprises 303 residues: Quinolinate synthase (303 aa).

Iminosuccinate is bound by residues His23 and Ser40. Cys85 contributes to the [4Fe-4S] cluster binding site. Residues 111–113 and Ser128 each bind iminosuccinate; that span reads YIN. [4Fe-4S] cluster is bound at residue Cys171. Iminosuccinate-binding positions include 197-199 and Thr214; that span reads HPE. Cys259 is a binding site for [4Fe-4S] cluster.

The protein belongs to the quinolinate synthase family. Type 2 subfamily. The cofactor is [4Fe-4S] cluster.

It localises to the cytoplasm. It catalyses the reaction iminosuccinate + dihydroxyacetone phosphate = quinolinate + phosphate + 2 H2O + H(+). It functions in the pathway cofactor biosynthesis; NAD(+) biosynthesis; quinolinate from iminoaspartate: step 1/1. Its function is as follows. Catalyzes the condensation of iminoaspartate with dihydroxyacetone phosphate to form quinolinate. In Clostridium acetobutylicum (strain ATCC 824 / DSM 792 / JCM 1419 / IAM 19013 / LMG 5710 / NBRC 13948 / NRRL B-527 / VKM B-1787 / 2291 / W), this protein is Quinolinate synthase.